The following is a 2774-amino-acid chain: Microtubule-associated protein 1A (2774 aa).

Phosphoserine occurs at positions 114, 117, 118, 121, and 155. Tyr-177 carries the phosphotyrosine modification. The tract at residues 310–329 (PSKIKHRADSKESLKAAPKT) is disordered. Residues Ser-319 and Ser-322 each carry the phosphoserine modification. Residues 336–338 (KRE) form repeat 1. Residues 336 to 541 (KREEVLEEGA…TQDFEELKRE (206 aa)) are 11 X 3 AA repeats of K-K-[DE]. Residues 342–390 (EEGAKEARSELAKELAKTEKKAKEPSEKPPEKPSKSERVRGESSEALKA) show a composition bias toward basic and acidic residues. Disordered regions lie at residues 342–718 (EEGA…SFLS), 737–808 (TIPG…TELT), 845–939 (EDQS…VGKE), 957–1078 (FGAP…QTGC), 1093–1344 (ETGE…ILPE), 1357–1646 (QKDG…SPEQ), 1693–1725 (ESTF…KDFQ), 1739–1843 (LAES…VPFS), and 1861–2644 (AELE…LVNG). Ser-384 carries the phosphoserine modification. The segment covering 391-406 (EKRRLIKDKAGKKHLK) has biased composition (basic residues). Basic and acidic residues-rich tracts occupy residues 407–464 (EKIS…KPDL) and 484–500 (VKVD…ELSS). 9 repeat units span residues 415–417 (KKD), 420–422 (KKE), 424–426 (KKE), 427–429 (RKE), 431–433 (KKE), 436–438 (RKE), 440–442 (KKD), 444–446 (KKD), and 449–451 (RKD). At Thr-504 the chain carries Phosphothreonine. Low complexity predominate over residues 506–516 (PAQKGAAPPAA). Ser-526 and Ser-527 each carry phosphoserine. 2 stretches are compositionally biased toward basic and acidic residues: residues 536–554 (EELK…DTGL) and 584–595 (EGEHVEREKEVV). Residues 539-541 (KRE) form repeat 11. Residues Ser-604 and Ser-611 each carry the phosphoserine modification. 2 stretches are compositionally biased toward basic and acidic residues: residues 614–631 (EVEK…REAE) and 638–675 (AARE…ETKA). Position 643 is a phosphoserine (Ser-643). Phosphothreonine is present on Thr-663. Phosphoserine is present on residues Ser-666, Ser-677, Ser-690, and Ser-785. Composition is skewed to polar residues over residues 845-858 (EDQS…PQTE) and 869-881 (TVTS…TEAT). Phosphoserine is present on residues Ser-872, Ser-875, Ser-876, and Ser-889. Residue Thr-892 is modified to Phosphothreonine. Phosphoserine is present on residues Ser-894, Ser-898, Ser-907, Ser-980, Ser-990, Ser-998, Ser-1007, Ser-1013, Ser-1022, Ser-1029, Ser-1037, Ser-1061, Ser-1132, Ser-1134, Ser-1148, Ser-1160, Ser-1178, Ser-1188, Ser-1191, Ser-1197, Ser-1206, and Ser-1209. Positions 1008–1028 (PVEDKSEPRDFQEDSWGETKH) are enriched in basic and acidic residues. The segment covering 1142 to 1157 (SVLSVVSPDTTKQEAT) has biased composition (polar residues). The segment covering 1180-1190 (EDTQSLSFSEE) has biased composition (polar residues). Polar residues predominate over residues 1198–1212 (LDISSKQLSPESLGT). The segment covering 1220-1236 (LGKEERGPVMKAEDDSC) has biased composition (basic and acidic residues). A phosphoserine mark is found at Ser-1252, Ser-1280, Ser-1301, Ser-1304, and Ser-1307. Low complexity predominate over residues 1293–1308 (TSDSSLTKSPESLSSP). Basic and acidic residues-rich tracts occupy residues 1317 to 1336 (WEGK…ETRQ), 1357 to 1409 (QKDG…EDQG), 1416 to 1428 (AEKD…RDTD), 1436 to 1479 (EPRD…EHSI), and 1487 to 1574 (RAPD…KADS). 4 positions are modified to phosphoserine: Ser-1504, Ser-1568, Ser-1574, and Ser-1594. The segment covering 1599 to 1613 (SKAREQEKKYWKEQD) has biased composition (basic and acidic residues). Phosphoserine occurs at positions 1622, 1643, 1715, 1742, 1757, 1763, and 1767. Over residues 1707 to 1718 (TPLQHTPRSPWT) the composition is skewed to polar residues. Thr-1772 is subject to Phosphothreonine. Residues Ser-1778 and Ser-1784 each carry the phosphoserine modification. The span at 1789-1803 (TESTAPMRNEPTTPS) shows a compositional bias: polar residues. The segment covering 1818–1839 (LPPAPLSPAPAPPTPAPEPHTP) has biased composition (pro residues). Residues 1873–1885 (KDYRKAEGEREGE) are compositionally biased toward basic and acidic residues. Ser-1897 is subject to Phosphoserine. Over residues 1908–1930 (ATRDTEQTEPEQREPTPYPDERS) the composition is skewed to basic and acidic residues. A Phosphothreonine modification is found at Thr-1923. Residues 1984–1997 (SSPASPQNLQSDTP) are compositionally biased toward polar residues. Ser-1988 carries the phosphoserine modification. Residues 2008–2034 (AVPPRQEPDPGPNVEPSITPPAVPPRA) show a composition bias toward pro residues. Thr-2026 bears the Phosphothreonine mark. Residues Ser-2043 and Ser-2077 each carry the phosphoserine modification. Residues 2055–2092 (PDRRTPSPKETGRGHWDDGTNDSDLEKGAREQPEKETR) are compositionally biased toward basic and acidic residues. Low complexity predominate over residues 2115–2125 (SSLSSDSHLGS). Pro residues predominate over residues 2144-2153 (PAPPQLPSPA). Phosphoserine occurs at positions 2204, 2221, 2225, 2228, 2229, and 2260. Residues 2226–2237 (EGSSSEATTPVI) show a composition bias toward polar residues. Over residues 2271–2287 (DLTPLSPAPSASLDLAP) the composition is skewed to low complexity. A compositionally biased stretch (pro residues) spans 2288-2298 (APAPAPAPAPG). Low complexity predominate over residues 2299-2309 (LPGDLGDGTLP). Over residues 2352–2364 (AEKEEAEAPHAWE) the composition is skewed to basic and acidic residues. Position 2424 is a phosphoserine (Ser-2424). Residues 2477–2489 (SASDSGSSQSDSD) show a composition bias toward low complexity. The span at 2534 to 2550 (DPPPTPLPDPRPSPPRP) shows a compositional bias: pro residues. Residues 2565–2575 (GRVERLREKGR) show a composition bias toward basic and acidic residues. Low complexity predominate over residues 2613-2623 (RTVPRPRSTPS). Phosphoserine is present on residues Ser-2620 and Ser-2635.

This sequence belongs to the MAP1 family. 3 different light chains, LC1 (a cleavage product of MAP1B), LC2 (a cleavage product of MAP1A) and LC3 (produced by one of the MAP1LC3 genes), can associate with the MAP1A or MAP1B heavy chains. Interacts with guanylate kinase-like domain of DLG1, DLG2 and DLG4. Binds to CSNK1D. Interacts with TIAM2. In terms of assembly, interacts with ELAVL4. In terms of processing, phosphorylated by CSNK1D. Post-translationally, LC2 is generated from MAP1A by proteolytic processing. It is free to associate with both MAP1A and MAP1B. Brain, heart and muscle.

Its subcellular location is the cytoplasm. It is found in the cytoskeleton. In terms of biological role, structural protein involved in the filamentous cross-bridging between microtubules and other skeletal elements. The protein is Microtubule-associated protein 1A (Map1a) of Rattus norvegicus (Rat).